We begin with the raw amino-acid sequence, 106 residues long: Gas vesicle protein J (106 aa).

This sequence belongs to the gas vesicle GvpA family.

It is found in the gas vesicle. A minor component of the gas vesicle, might be involved in nucleating gas vesicle formation. Gas vesicles are hollow, gas filled proteinaceous nanostructures found in some microorganisms. It is not clear what function gas vesicles perform in soil bacteria. In Streptomyces sp. (strain CB03234), this protein is Gas vesicle protein J.